We begin with the raw amino-acid sequence, 653 residues long: MKLNISELKCQQHDKLVTIYCCACDAYFCKKCDKEKHSQDDNQEDSLHIRGLVNKDVIIGRDEEDDDDEDDEYDNKIQDILKKSNNLKKSNSIGGNIVENIELKSPMKTDSPYFIRDKNSIQSDIDSKITEKIDLDNLIHEEDDPFTIGINSNNSNSNNLIDVNDLHTPSTPSPLPSPSLSRSSSTNIKPQQQTSPSPSRSSESNSTTNNNNNKNEKKKLKNSSNSELNRKKIYKKEKIIGDSDEEEHILNNGNKNKNNKSKSVYDYDDDDDNDDDNNNNNNNNNNNNNNNNNENDDNSNSKSEGGVFYSSSSETEKEIENVENKIDNKPKPPNKSLPKTPQSNKKKKPENSIMVKNLDSGLVEQIFEEEEEEEEDEDEVGSESGGGGTIFKNPYSNRKNKSGKYKSNSCALEEGEEDDSSIQSQFDGEEKEAVHIVQGIVEGAILFGTNIATGLSGIVAEPIINIVDNQDNKVKGFFKGVGKGLLGAVTSPVKGGSGFLIKTAEGLRNTPATVFHGDHEDLMGFSDADQVKEREASHIFEGIAQGTISLSKNLYLGVTGIVTEPIKGLREDENNKAKGFFKGVGKGLMGAIVKPASGIIEMAGKTAEGIANTPHTIINAIEMKIDEKSNNNNNNNNLDSDSEGETYVNPNEN.

The B box-type zinc finger occupies 5–49 (ISELKCQQHDKLVTIYCCACDAYFCKKCDKEKHSQDDNQEDSLHI). Zn(2+) is bound by residues Cys-10, His-13, Cys-32, and His-37. Disordered regions lie at residues 159-232 (NLID…NRKK), 248-420 (HILN…EDDS), and 627-653 (EKSNNNNNNNNLDSDSEGETYVNPNEN). Positions 195–213 (SPSPSRSSESNSTTNNNNN) are enriched in low complexity. A compositionally biased stretch (acidic residues) spans 266–277 (DYDDDDDNDDDN). Positions 278 to 293 (NNNNNNNNNNNNNNNN) are enriched in low complexity. Residues 314–330 (ETEKEIENVENKIDNKP) are compositionally biased toward basic and acidic residues. The segment covering 366-381 (IFEEEEEEEEDEDEVG) has biased composition (acidic residues).

This sequence belongs to the VPS13 family.

It is found in the membrane. In terms of biological role, mediates the transfer of lipids between membranes at organelle contact sites. The polypeptide is Intermembrane lipid transfer protein vps13l (vps13l) (Dictyostelium discoideum (Social amoeba)).